A 328-amino-acid chain; its full sequence is D-cysteine desulfhydrase (328 aa).

Lysine 51 is modified (N6-(pyridoxal phosphate)lysine).

Belongs to the ACC deaminase/D-cysteine desulfhydrase family. In terms of assembly, homodimer. The cofactor is pyridoxal 5'-phosphate.

It carries out the reaction D-cysteine + H2O = hydrogen sulfide + pyruvate + NH4(+) + H(+). In terms of biological role, catalyzes the alpha,beta-elimination reaction of D-cysteine and of several D-cysteine derivatives. It could be a defense mechanism against D-cysteine. The protein is D-cysteine desulfhydrase of Escherichia fergusonii (strain ATCC 35469 / DSM 13698 / CCUG 18766 / IAM 14443 / JCM 21226 / LMG 7866 / NBRC 102419 / NCTC 12128 / CDC 0568-73).